The sequence spans 208 residues: V-type ATP synthase subunit E (208 aa).

This sequence belongs to the V-ATPase E subunit family.

In terms of biological role, produces ATP from ADP in the presence of a proton gradient across the membrane. This Chlamydia muridarum (strain MoPn / Nigg) protein is V-type ATP synthase subunit E (atpE).